A 387-amino-acid polypeptide reads, in one-letter code: WD repeat-containing protein 89 (387 aa).

6 WD repeats span residues 21 to 65, 68 to 107, 112 to 156, 168 to 208, 214 to 254, and 319 to 358; these read KEPT…VLRE, GYPG…EKPV, GYPS…QNLS, THSD…EEDA, NSIS…TDEP, and GHAA…KTFT.

The chain is WD repeat-containing protein 89 (WDR89) from Homo sapiens (Human).